Here is a 252-residue protein sequence, read N- to C-terminus: Protein GrpE (252 aa).

Residues 1-22 (MHNPQSRGHNLSQAMSDQTVTN) show a composition bias toward polar residues. The segment at 1-70 (MHNPQSRGHN…EEDQASEATS (70 aa)) is disordered.

The protein belongs to the GrpE family. As to quaternary structure, homodimer.

The protein resides in the cytoplasm. Functionally, participates actively in the response to hyperosmotic and heat shock by preventing the aggregation of stress-denatured proteins, in association with DnaK and GrpE. It is the nucleotide exchange factor for DnaK and may function as a thermosensor. Unfolded proteins bind initially to DnaJ; upon interaction with the DnaJ-bound protein, DnaK hydrolyzes its bound ATP, resulting in the formation of a stable complex. GrpE releases ADP from DnaK; ATP binding to DnaK triggers the release of the substrate protein, thus completing the reaction cycle. Several rounds of ATP-dependent interactions between DnaJ, DnaK and GrpE are required for fully efficient folding. The protein is Protein GrpE of Thermosynechococcus vestitus (strain NIES-2133 / IAM M-273 / BP-1).